A 143-amino-acid polypeptide reads, in one-letter code: NADH-quinone oxidoreductase subunit A (143 aa).

The next 3 helical transmembrane spans lie at 8–28, 63–83, and 93–113; these read FGNVFVFLLLGVVFVAGGYLT, FYVVALIFIIFDVEVVFLFPW, and FALIEALVFAGILILGLVYAW.

The protein belongs to the complex I subunit 3 family. NDH-1 is composed of 14 different subunits. Subunits NuoA, H, J, K, L, M, N constitute the membrane sector of the complex.

Its subcellular location is the cell inner membrane. The enzyme catalyses a quinone + NADH + 5 H(+)(in) = a quinol + NAD(+) + 4 H(+)(out). Functionally, NDH-1 shuttles electrons from NADH, via FMN and iron-sulfur (Fe-S) centers, to quinones in the respiratory chain. The immediate electron acceptor for the enzyme in this species is believed to be a menaquinone. Couples the redox reaction to proton translocation (for every two electrons transferred, four hydrogen ions are translocated across the cytoplasmic membrane), and thus conserves the redox energy in a proton gradient. The polypeptide is NADH-quinone oxidoreductase subunit A (Chlorobium luteolum (strain DSM 273 / BCRC 81028 / 2530) (Pelodictyon luteolum)).